A 32-amino-acid chain; its full sequence is YCQKWMWTCDEERKCCEGLVCRLWCKKKIEEG.

Disulfide bonds link cysteine 2-cysteine 16, cysteine 9-cysteine 21, and cysteine 15-cysteine 25.

Belongs to the neurotoxin 30 (phrixotoxin) family. In terms of tissue distribution, expressed by the venom gland.

Its subcellular location is the secreted. Binds the voltage-sensor domain of the potassium channel KvAP (from the archaeon Aeropyrum pernix) and affects channel gating. This Grammostola rosea (Chilean rose tarantula) protein is Kappa-theraphotoxin-Gr2b.